The sequence spans 231 residues: RNA pyrophosphohydrolase (231 aa).

The Nudix hydrolase domain occupies 6 to 149 (GFRPNVGIIL…KRDVYQLALT (144 aa)). The short motif at 38-59 (GGIKYGETPVQAMYRELHEETG) is the Nudix box element. The interval 157 to 190 (RPQPRTERPGGHHHGQRYPRMASSVNAPPGASMA) is disordered.

Belongs to the Nudix hydrolase family. RppH subfamily. The cofactor is a divalent metal cation.

Functionally, accelerates the degradation of transcripts by removing pyrophosphate from the 5'-end of triphosphorylated RNA, leading to a more labile monophosphorylated state that can stimulate subsequent ribonuclease cleavage. The chain is RNA pyrophosphohydrolase from Paraburkholderia phymatum (strain DSM 17167 / CIP 108236 / LMG 21445 / STM815) (Burkholderia phymatum).